Consider the following 265-residue polypeptide: Mlc titration factor A (265 aa).

His111, His148, His152, and Glu211 together coordinate Zn(2+).

The protein belongs to the MtfA family. As to quaternary structure, interacts with Mlc. Requires Zn(2+) as cofactor.

It is found in the cytoplasm. Its function is as follows. Involved in the modulation of the activity of the glucose-phosphotransferase system (glucose-PTS). Interacts with the transcriptional repressor Mlc, preventing its interaction with DNA and leading to the modulation of expression of genes regulated by Mlc, including ptsG, which encodes the PTS system glucose-specific EIICB component. Shows zinc-dependent metallopeptidase activity. This chain is Mlc titration factor A, found in Salmonella choleraesuis (strain SC-B67).